A 362-amino-acid polypeptide reads, in one-letter code: Probable dual-specificity RNA methyltransferase RlmN (362 aa).

Glu91 serves as the catalytic Proton acceptor. A Radical SAM core domain is found at 97-329 (QHYGLSVCVT…KKNGVNCVVR (233 aa)). Residues Cys104 and Cys340 are joined by a disulfide bond. [4Fe-4S] cluster contacts are provided by Cys111, Cys115, and Cys118. S-adenosyl-L-methionine is bound by residues 163–164 (GE), Ser195, 218–220 (SLH), and Asn296. Cys340 serves as the catalytic S-methylcysteine intermediate.

This sequence belongs to the radical SAM superfamily. RlmN family. [4Fe-4S] cluster is required as a cofactor.

The protein resides in the cytoplasm. The catalysed reaction is adenosine(2503) in 23S rRNA + 2 reduced [2Fe-2S]-[ferredoxin] + 2 S-adenosyl-L-methionine = 2-methyladenosine(2503) in 23S rRNA + 5'-deoxyadenosine + L-methionine + 2 oxidized [2Fe-2S]-[ferredoxin] + S-adenosyl-L-homocysteine. The enzyme catalyses adenosine(37) in tRNA + 2 reduced [2Fe-2S]-[ferredoxin] + 2 S-adenosyl-L-methionine = 2-methyladenosine(37) in tRNA + 5'-deoxyadenosine + L-methionine + 2 oxidized [2Fe-2S]-[ferredoxin] + S-adenosyl-L-homocysteine. Its function is as follows. Specifically methylates position 2 of adenine 2503 in 23S rRNA and position 2 of adenine 37 in tRNAs. The chain is Probable dual-specificity RNA methyltransferase RlmN from Streptococcus gordonii (strain Challis / ATCC 35105 / BCRC 15272 / CH1 / DL1 / V288).